Consider the following 443-residue polypeptide: MPMYEDRIDLYGADGKLLEEDVPLEAISPLKNPTIANLVSDVKRSVAVNLAGIEGSLRKAALGGKSNFIPGREVELPIVENAEAIAEKVKKLVQTSEDDDTNIRLINNGQQILVQVPTTRMGVAADYTVSALVTGAAVVQAIIDEFDVDMFDANAVKTAVMGRYPQTVDFTGANLSTLLGPPVLLEGLGYGLRNIMANHVVAITRKNTLNASALSSILEQTAMFETGDAVGAFERMHLLGLAYQGLNANNLLFDLVKENGKGTVGTVIASLVERAVEDGVVKVAREMNSGYKVYEPADWALWNAYAATGLLAATIVNVGAARAAQGVASTVLYYNDILEYETGLPGVDFGRAMGTAVGFSFFSHSIYGGGGPGIFHGNHVVTRHSKGFALPCVAAAMCLDAGTQMFSVEKTSGLIGSVYSEIDYFREPIVNVAKGAAEVKDQL.

Y367 contributes to the coenzyme M binding site. G369 contributes to the coenzyme B binding site.

This sequence belongs to the methyl-coenzyme M reductase beta subunit family. MCR is a hexamer of two alpha, two beta, and two gamma chains, forming a dimer of heterotrimers. Coenzyme F430 serves as cofactor.

The enzyme catalyses coenzyme B + methyl-coenzyme M = methane + coenzyme M-coenzyme B heterodisulfide. It participates in one-carbon metabolism; methyl-coenzyme M reduction; methane from methyl-coenzyme M: step 1/1. Its function is as follows. Component of the methyl-coenzyme M reductase (MCR) I that catalyzes the reductive cleavage of methyl-coenzyme M (CoM-S-CH3 or 2-(methylthio)ethanesulfonate) using coenzyme B (CoB or 7-mercaptoheptanoylthreonine phosphate) as reductant which results in the production of methane and the mixed heterodisulfide of CoB and CoM (CoM-S-S-CoB). This is the final step in methanogenesis. The sequence is that of Methyl-coenzyme M reductase II subunit beta from Methanothermobacter marburgensis (strain ATCC BAA-927 / DSM 2133 / JCM 14651 / NBRC 100331 / OCM 82 / Marburg) (Methanobacterium thermoautotrophicum).